The sequence spans 106 residues: Nucleoid-associated protein Noc_2594 (106 aa).

Disordered regions lie at residues 1-20 (MKGGLGNLMKQAQQLQSNME) and 85-106 (QSKEKMSSMTSGMLPPGFKLPL). A compositionally biased stretch (polar residues) spans 10-20 (KQAQQLQSNME).

This sequence belongs to the YbaB/EbfC family. Homodimer.

It is found in the cytoplasm. The protein localises to the nucleoid. Functionally, binds to DNA and alters its conformation. May be involved in regulation of gene expression, nucleoid organization and DNA protection. This chain is Nucleoid-associated protein Noc_2594, found in Nitrosococcus oceani (strain ATCC 19707 / BCRC 17464 / JCM 30415 / NCIMB 11848 / C-107).